Reading from the N-terminus, the 190-residue chain is FUN14 domain-containing protein 2 (190 aa).

A compositionally biased stretch (polar residues) spans 1–13; sequence METSTQRTGSHLA. The segment at 1-31 is disordered; the sequence is METSTQRTGSHLAQTAAARHSASSRGEAARV. The Cytoplasmic portion of the chain corresponds to 1-81; that stretch reads METSTQRTGS…GQESGPSAEK (81 aa). A phosphoserine mark is found at serine 10 and serine 54. The helical transmembrane segment at 82–102 threads the bilayer; that stretch reads YSVATQLLIGGVTGWCTGFIF. Over 103 to 108 the chain is Mitochondrial intermembrane; sequence QKVGKL. The chain crosses the membrane as a helical span at residues 109–129; the sequence is AATAVGGGFFLLQLANHTGYI. At 130 to 165 the chain is on the cytoplasmic side; that stretch reads KVDWQRVEKDMKKAKEQLKIRKSNQIPTEVKSKAEE. Serine 152 is modified (phosphoserine). The chain crosses the membrane as a helical span at residues 166-186; sequence VVSFVKKNVLVTGGFFGGFLL. Topologically, residues 187-190 are mitochondrial intermembrane; that stretch reads GMAS.

It belongs to the FUN14 family.

It localises to the mitochondrion outer membrane. The protein resides in the nucleus. In terms of biological role, binds directly and specifically 1,2-Diacyl-sn-glycero-3-phospho-(1'-myo-inositol-3',4',5'-bisphosphate) (PIP3) leading to the recruitment of PIP3 to mitochondria and may play a role in the regulation of the platelet activation via AKT/GSK3B/cGMP signaling pathways. May act as transcription factor that regulates SREBP1 (isoform SREBP-1C) expression in order to modulate triglyceride (TG) homeostasis in hepatocytes. The sequence is that of FUN14 domain-containing protein 2 from Bos taurus (Bovine).